Consider the following 452-residue polypeptide: C4-dicarboxylate transport protein 1 (452 aa).

9 consecutive transmembrane segments (helical) span residues 18 to 38 (FQVVCAVIAGVALGYFYPSVG), 51 to 71 (LIKMMIAPIIFCTVVVGIAGM), 83 to 103 (LALLYFEVVSTFALIIGLLLV), 151 to 171 (AFAKGEILQVLLLAILFGFAL), 191 to 211 (VLFTIVGFIMKVAPIGAFGAM), 229 to 249 (LMGAFYLTCLIFIFGVLGAIA), 304 to 324 (GYSFNLDGTSIYLTMAAVFIA), 337 to 357 (ITLLGVLLLTSKGAAGVTGSG), and 359 to 379 (IVLAATLSAVGTVPVAGLALI). Residues 426-452 (WEEAQEPERVLDKKTEHMPVSAMSDAG) form a disordered region. Basic and acidic residues predominate over residues 431-442 (EPERVLDKKTEH).

The protein belongs to the dicarboxylate/amino acid:cation symporter (DAACS) (TC 2.A.23) family.

The protein localises to the cell inner membrane. In terms of biological role, responsible for the transport of dicarboxylates such as succinate, fumarate, and malate from the periplasm across the membrane. The chain is C4-dicarboxylate transport protein 1 from Polaromonas naphthalenivorans (strain CJ2).